The primary structure comprises 469 residues: MIPVRGFEGKTVAVFGLGRTGLTAARALIAGGAKVALWDEKPESRQAAVAEGLNVVDLTTSDWSDYAALMLSPGVPLTHPKPHWTVGKAKAAGVEVLGDIELFARTVNAAPEHKKPKIIAITGTNGKSTTTALIGHLCRQAGRDTRVGGNIGEGVLGLEDMHGGAVYVLELSSYQLDLTSSLKPDAVVLLNISPDHLDRHGGMDGYIAAKRRIFLNQGKGDTAIIGVDDPWCQQICTEITAANRRTIWPISAGKAMGRGVYALQGVLYDATGERVTEMADLLRARSLPGRHNWQNAAAAYAAAKAIGIPAHQAVDGLMSFPGLAHRMETVGKLGKVRFVNDSKATNADAARQAMSSYPKFYWIAGGVPKAGGIDDLVDLFPRVAGAYLIGQAAEDFGKTLEGKAPARQCGDIETAVAAAYADAVASGEEAVVLLSPACASFDQFADFEQRGEAFRAAVNGLGKPAAKRA.

ATP is bound at residue 123–129 (GTNGKST).

This sequence belongs to the MurCDEF family.

The protein localises to the cytoplasm. It carries out the reaction UDP-N-acetyl-alpha-D-muramoyl-L-alanine + D-glutamate + ATP = UDP-N-acetyl-alpha-D-muramoyl-L-alanyl-D-glutamate + ADP + phosphate + H(+). The protein operates within cell wall biogenesis; peptidoglycan biosynthesis. Functionally, cell wall formation. Catalyzes the addition of glutamate to the nucleotide precursor UDP-N-acetylmuramoyl-L-alanine (UMA). In Caulobacter sp. (strain K31), this protein is UDP-N-acetylmuramoylalanine--D-glutamate ligase.